The primary structure comprises 1145 residues: Cation channel sperm-associated auxiliary subunit gamma 2 (1145 aa).

The first 38 residues, 1-38 (MVSRPAMSPVSPVWPRKPNLWAFWVLRLVLLLSLKSWA), serve as a signal peptide directing secretion. Topologically, residues 39-1061 (EDALQHCTWL…IHGLPLSSKR (1023 aa)) are extracellular. Disulfide bonds link cysteine 45–cysteine 106 and cysteine 160–cysteine 166. Asparagine 103 is a glycosylation site (N-linked (GlcNAc...) asparagine). A glycan (N-linked (GlcNAc...) asparagine) is linked at asparagine 178. Cysteine 289 and cysteine 344 are joined by a disulfide. N-linked (GlcNAc...) asparagine glycans are attached at residues asparagine 356, asparagine 402, asparagine 672, and asparagine 743. Cystine bridges form between cysteine 395/cysteine 403, cysteine 634/cysteine 856, cysteine 802/cysteine 830, cysteine 878/cysteine 1042, cysteine 905/cysteine 914, and cysteine 1006/cysteine 1012. N-linked (GlcNAc...) asparagine glycosylation occurs at asparagine 1038. The chain crosses the membrane as a helical span at residues 1062 to 1083 (TSFIVMVSTSFFIALVVFYILF). The Cytoplasmic portion of the chain corresponds to 1084 to 1145 (CLVWPHIVKA…KEDNVQAKTA (62 aa)).

This sequence belongs to the CATSPERG family. In terms of assembly, component of the CatSper complex or CatSpermasome composed of the core pore-forming members CATSPER1, CATSPER2, CATSPER3 and CATSPER4 as well as auxiliary members CATSPERB, CATSPERG2, CATSPERD, CATSPERE, CATSPERZ, C2CD6/CATSPERT, SLCO6C1, TMEM249, TMEM262 and EFCAB9. HSPA1 may be an additional auxiliary complex member. The core complex members CATSPER1, CATSPER2, CATSPER3 and CATSPER4 form a heterotetrameric channel. The auxiliary CATSPERB, CATSPERG2, CATSPERD and CATSPERE subunits form a pavilion-like structure over the pore which stabilizes the complex through interactions with CATSPER4, CATSPER3, CATSPER1 and CATSPER2 respectively. SLCO6C1 interacts with CATSPERE and TMEM262/CATSPERH interacts with CATSPERB, further stabilizing the complex. C2CD6/CATSPERT interacts at least with CATSPERD and is required for targeting the CatSper complex in the flagellar membrane. In terms of tissue distribution, testis-specific. Specifically expressed in the principal piece of the sperm tail (at protein level). Expressed in spermatocytes and spermatids within the seminiferous tubule but not in interstitial cells.

It is found in the cell projection. It localises to the cilium. The protein localises to the flagellum membrane. In terms of biological role, auxiliary component of the CatSper complex, a complex involved in sperm cell hyperactivation. Sperm cell hyperactivation is needed for sperm motility which is essential late in the preparation of sperm for fertilization. The protein is Cation channel sperm-associated auxiliary subunit gamma 2 of Mus musculus (Mouse).